The sequence spans 445 residues: DILAAFRVTPQPGVPPEEAGAAVAAESSTGTWTTVWTDGLTSLDRYKGRCYHIEPVLGEKDQYICYVAYPLDLFEEGSVTNMFTSIVGNVFGFKALRALRLEDLRIPTAYVKTFQGPPHGIQVERDKLNKYGRPLLGCTIKPKLGLSAKNYGRAVYECLRGGLDFTKDDENVNSQPFMRWRDXFLFCAEALYKAQCETGEIKGHYLNATAGTCEEMMKRAIFARELGVPIVMHDYLTGGFTANTTLAHYCRDNGLLLHIHRAMHAVIDRQKNHGMTFRVLAKALRMSGGDHIHAGTVVGKLEGERDITLGFVDLLRDDFIEKDRSRGIYFTQDWVSLPGVIPVASGGIHVXHMPALTEIFGDDAVLQFGGGTLGHPWGNAPGAVANRVALEACVKARNEGRDLAAEGNVIIREXSKWSPELAAACEVWKEIKFEFKAVDTLDPEK.

Substrate is bound by residues Asn-89 and Thr-139. Lys-141 functions as the Proton acceptor in the catalytic mechanism. Lys-143 serves as a coordination point for substrate. Positions 167, 169, and 170 each coordinate Mg(2+). An N6-carboxylysine modification is found at Lys-167. His-260 (proton acceptor) is an active-site residue. 3 residues coordinate substrate: Arg-261, His-293, and Ser-345.

It belongs to the RuBisCO large chain family. Type I subfamily. As to quaternary structure, heterohexadecamer of 8 large chains and 8 small chains; disulfide-linked. The disulfide link is formed within the large subunit homodimers. The cofactor is Mg(2+). The disulfide bond which can form in the large chain dimeric partners within the hexadecamer appears to be associated with oxidative stress and protein turnover.

It localises to the plastid. Its subcellular location is the chloroplast. It carries out the reaction 2 (2R)-3-phosphoglycerate + 2 H(+) = D-ribulose 1,5-bisphosphate + CO2 + H2O. It catalyses the reaction D-ribulose 1,5-bisphosphate + O2 = 2-phosphoglycolate + (2R)-3-phosphoglycerate + 2 H(+). Its function is as follows. RuBisCO catalyzes two reactions: the carboxylation of D-ribulose 1,5-bisphosphate, the primary event in carbon dioxide fixation, as well as the oxidative fragmentation of the pentose substrate in the photorespiration process. Both reactions occur simultaneously and in competition at the same active site. This Callicarpa dichotoma (Purple beautyberry) protein is Ribulose bisphosphate carboxylase large chain.